We begin with the raw amino-acid sequence, 312 residues long: Mycothiol acetyltransferase (312 aa).

2 consecutive N-acetyltransferase domains span residues 8–136 and 149–301; these read PIIR…LPMP and LRLD…HQDH. A 1D-myo-inositol 2-(L-cysteinylamino)-2-deoxy-alpha-D-glucopyranoside-binding site is contributed by Glu38. Residues 77-79 and 85-90 contribute to the acetyl-CoA site; these read LMV and RQGIAT. 1D-myo-inositol 2-(L-cysteinylamino)-2-deoxy-alpha-D-glucopyranoside is bound by residues Glu175, Lys215, and Glu226. Acetyl-CoA contacts are provided by residues 230-232 and 237-243; these read LGV and EGKGVGR. Tyr264 lines the 1D-myo-inositol 2-(L-cysteinylamino)-2-deoxy-alpha-D-glucopyranoside pocket. An acetyl-CoA-binding site is contributed by 269–274; that stretch reads NERVVH. The segment at 292 to 312 is disordered; sequence PAKPARHQDHGRQSSPQERDA. Positions 297–312 are enriched in basic and acidic residues; that stretch reads RHQDHGRQSSPQERDA.

It belongs to the acetyltransferase family. MshD subfamily. In terms of assembly, monomer.

It carries out the reaction 1D-myo-inositol 2-(L-cysteinylamino)-2-deoxy-alpha-D-glucopyranoside + acetyl-CoA = mycothiol + CoA + H(+). In terms of biological role, catalyzes the transfer of acetyl from acetyl-CoA to desacetylmycothiol (Cys-GlcN-Ins) to form mycothiol. In Propionibacterium freudenreichii subsp. shermanii (strain ATCC 9614 / DSM 4902 / CIP 103027 / NCIMB 8099 / CIRM-BIA1), this protein is Mycothiol acetyltransferase.